We begin with the raw amino-acid sequence, 566 residues long: MTILPKKKPPPPDADPANEPPPPGPLPPAPRRGAGVGVGGGGTGVGGGERDRDSGVVGARPRASPPPQGPLPGPPGALHRWALAVPPGAVAGPRPQQASPPPCGGPGGPGGGPGDALGATTAGVGAAGVVVGVGGTVGVGGCCSGPGHSKRRRQAPGVGAVGGASPEREEVGAGYNSEDEYEAAAARIEAMDPATVEQQEHWFEKALRDKKGFIIKQMKEDGACLFRAVADQVYGDQDMHEVVRKHCMDYLMKNADYFSNYVTEDFTTYINRKRKNNCHGNHIEMQAMAEMYNRPVEVYQYSTEPINTFHGIHQNEDEPIRVSYHRNIHYNSVVNPNKATIGVGLGLPSFKPGFAEQSLMKNAIKTSEESWIEQQMLEDKKRATDWEATNEAIEEQVARESYLQWLRDQEKQARQVRGPSQPRKASATCSSATAAASSGLEEWTSRSPRQRSSASSPEHPELHAELGIKPPSPGTVLALAKPPSPCAPGTSSQFSAGGDRATSPLVSLYPALECRALIQQMSPSAFGLNDWDDDEILASVLAVSQQEYLDSMKKNKVHREPPPDKS.

Disordered regions lie at residues M1 to L117 and G145 to Y175. Positions P11–P30 are enriched in pro residues. Residues A34–G47 are compositionally biased toward gly residues. The span at A63–P75 shows a compositional bias: pro residues. S64 carries the phosphoserine modification. The span at A84–Q97 shows a compositional bias: low complexity. Residues G105–D115 show a composition bias toward gly residues. Position 165 is a phosphoserine (S165). Y175 is modified (phosphotyrosine). At S177 the chain carries Phosphoserine. A Phosphothreonine modification is found at T195. Residues F213 to P336 enclose the OTU domain. Residues M218–C224 form a cys-loop region. D221 is an active-site residue. Residue C224 is the Nucleophile of the active site. Positions K273–I283 are variable-loop. S323 is subject to Phosphoserine. Residues Y324–H329 form a his-loop region. The active site involves H329. Phosphoserine occurs at positions 332 and 370. Residues A413–D499 form a disordered region. Low complexity-rich tracts occupy residues A425 to S438 and S445 to P457. Residue S447 is modified to Phosphoserine. Phosphothreonine is present on T502. S503 is modified (phosphoserine).

This sequence belongs to the peptidase C85 family. Interacts with TRAF3. Post-translationally, phosphorylation at Ser-177 is required for deubiquitinating activity. Phosphorylation at Ser-323, Ser-332 and Ser-503 by MTOR promotes its activity.

Its subcellular location is the nucleus. The enzyme catalyses Thiol-dependent hydrolysis of ester, thioester, amide, peptide and isopeptide bonds formed by the C-terminal Gly of ubiquitin (a 76-residue protein attached to proteins as an intracellular targeting signal).. With respect to regulation, inhibited by N-ethyl-maleimide (NEM). Its function is as follows. Deubiquitinating enzyme that functions as a negative regulator of the innate immune system. Has peptidase activity towards 'Lys-48'- and 'Lys-63'-linked polyubiquitin chains. Can also cleave 'Lys-11'-linked ubiquitin chains (in vitro). Acts via TRAF3 deubiquitination and subsequent suppression of type I interferon (IFN) production. Controls neuroectodermal differentiation through cleaving 'Lys-48'-linked ubiquitin chains to counteract degradation of select chromatin regulators such as ARID1A, HDAC2 and HCF1. Acts as a positive regulator of mTORC1 and mTORC2 signaling following phosphorylation by MTOR: acts by mediating deubiquitination of BTRC, leading to its stability. This Mus musculus (Mouse) protein is OTU domain-containing protein 5.